The following is a 557-amino-acid chain: Membrane protein insertase YidC (557 aa).

Helical transmembrane passes span 3-23, 363-383, 437-457, 476-496, and 507-527; these read IKRTVLWVIFFMSAVMLFDNW, FVGNWGWAIVLLTLLIKAVFF, LPVVIQIPVFISLYWVLLASV, PYFILPVLMAVSMFVQTKLNP, and MMFMPIAFSVMFFFFPAGLVL.

This sequence belongs to the OXA1/ALB3/YidC family. Type 1 subfamily. Interacts with the Sec translocase complex via SecD. Specifically interacts with transmembrane segments of nascent integral membrane proteins during membrane integration.

It is found in the cell inner membrane. Functionally, required for the insertion and/or proper folding and/or complex formation of integral membrane proteins into the membrane. Involved in integration of membrane proteins that insert both dependently and independently of the Sec translocase complex, as well as at least some lipoproteins. Aids folding of multispanning membrane proteins. In Burkholderia thailandensis (strain ATCC 700388 / DSM 13276 / CCUG 48851 / CIP 106301 / E264), this protein is Membrane protein insertase YidC.